The sequence spans 563 residues: Eukaryotic translation initiation factor 3 subunit D-1 (563 aa).

A disordered region spans residues valine 98 to serine 167. Over residues lysine 100–asparagine 121 the composition is skewed to basic residues. Threonine 128 is subject to Phosphothreonine. Positions glutamate 291–proline 305 are RNA gate.

This sequence belongs to the eIF-3 subunit D family. Component of the eukaryotic translation initiation factor 3 (eIF-3) complex. The eIF-3 complex interacts with pix.

It localises to the cytoplasm. In terms of biological role, mRNA cap-binding component of the eukaryotic translation initiation factor 3 (eIF-3) complex, which is involved in protein synthesis of a specialized repertoire of mRNAs and, together with other initiation factors, stimulates binding of mRNA and methionyl-tRNAi to the 40S ribosome. The eIF-3 complex specifically targets and initiates translation of a subset of mRNAs involved in cell proliferation. In the eIF-3 complex, eif3d specifically recognizes and binds the 7-methylguanosine cap of a subset of mRNAs. The chain is Eukaryotic translation initiation factor 3 subunit D-1 from Drosophila mojavensis (Fruit fly).